The chain runs to 393 residues: Ninja-family protein 1 (393 aa).

Disordered stretches follow at residues 1–27 (MEGFSRDLLCGIGKGDAPPPEKRPGQL) and 155–200 (NDDW…KEMN). Positions 156 to 170 (DDWKKRKEAQSLKRL) are enriched in basic and acidic residues.

This sequence belongs to the Ninja family.

The protein localises to the nucleus. The protein is Ninja-family protein 1 of Zea mays (Maize).